The primary structure comprises 516 residues: Acetylcholine receptor subunit delta (516 aa).

The first 21 residues, 1 to 21 (MEGSVLTLVLLAALVVCGSWG), serve as a signal peptide directing secretion. At 22–244 (LNEEERLIRH…VTFYLIIRRK (223 aa)) the chain is on the extracellular side. 2 N-linked (GlcNAc...) asparagine glycosylation sites follow: asparagine 96 and asparagine 163. Cysteines 150 and 164 form a disulfide. A run of 3 helical transmembrane segments spans residues 245–269 (PLFY…VFYL), 279–296 (MAIS…LISK), and 311–332 (FLLF…VLNI). The Cytoplasmic portion of the chain corresponds to 333 to 470 (HFRTPSTHVL…WNRVARTVDR (138 aa)). Residue tyrosine 389 is modified to Phosphotyrosine; by Tyr-kinases. A helical membrane pass occupies residues 471–493 (LCLFVVTPIMVVGTAWIFLQGAY).

This sequence belongs to the ligand-gated ion channel (TC 1.A.9) family. Acetylcholine receptor (TC 1.A.9.1) subfamily. Delta/CHRND sub-subfamily. As to quaternary structure, pentamer of two alpha chains, and one each of the beta, delta, and gamma (in immature muscle) or epsilon (in mature muscle) chains. The muscle heteropentamer composed of alpha-1, beta-1, delta, epsilon subunits interacts with the alpha-conotoxin ImII.

The protein resides in the postsynaptic cell membrane. It localises to the cell membrane. The enzyme catalyses K(+)(in) = K(+)(out). The catalysed reaction is Na(+)(in) = Na(+)(out). Functionally, after binding acetylcholine, the AChR responds by an extensive change in conformation that affects all subunits and leads to opening of an ion-conducting channel across the plasma membrane. This is Acetylcholine receptor subunit delta (CHRND) from Bos taurus (Bovine).